The following is an 84-amino-acid chain: Small ribosomal subunit protein uS17 (84 aa).

The protein belongs to the universal ribosomal protein uS17 family. In terms of assembly, part of the 30S ribosomal subunit.

Its function is as follows. One of the primary rRNA binding proteins, it binds specifically to the 5'-end of 16S ribosomal RNA. The protein is Small ribosomal subunit protein uS17 of Borrelia duttonii (strain Ly).